The sequence spans 501 residues: Cystine/glutamate transporter (501 aa).

Topologically, residues 1-43 (MVRKPVVSTISKGGYLQGNVNGRLPSLGNKEPPGQEKVQLKRK) are cytoplasmic. Serine 26 is modified (phosphoserine). Residues 44-64 (VTLLRGVSIIIGTIIGAGIFI) traverse the membrane as a helical segment. The Extracellular portion of the chain corresponds to 65-74 (SPKGVLQNTG). Residues 75–95 (SVGMSLTIWTVCGVLSLFGAL) form a helical membrane-spanning segment. Over 96 to 101 (SYAELG) the chain is Cytoplasmic. An intramembrane segment occupies 102-116 (TTIKKSGGHYTYILE). Over 117–130 (VFGPLPAFVRVWVE) the chain is Cytoplasmic. The chain crosses the membrane as a helical span at residues 131–150 (LLIIRPAATAVISLAFGRYI). Arginine 135 is an L-glutamate binding site. Residues 151-163 (LEPFFIQCEIPEL) lie on the Extracellular side of the membrane. The chain crosses the membrane as a helical span at residues 164–179 (AIKLITAVGITVVMVL). Over 180–193 (NSMSVSWSARIQIF) the chain is Cytoplasmic. A helical transmembrane segment spans residues 194–210 (LTFCKLTAILIIIVPGV). At 211 to 234 (MQLIKGQTQNFKDAFSGRDSSITR) the chain is on the extracellular side. Residues 235-255 (LPLAFYYGMYAYAGWFYLNFV) traverse the membrane as a helical segment. Tyrosine 244 provides a ligand contact to L-glutamate. The Cytoplasmic portion of the chain corresponds to 256–265 (TEEVENPEKT). Residues 266–286 (IPLAICISMAIVTIGYVLTNV) form a helical membrane-spanning segment. Residues 287–317 (AYFTTINAEELLLSNAVAVTFSERLLGNFSL) are Extracellular-facing. Asparagine 314 carries N-linked (GlcNAc...) asparagine glycosylation. The helical transmembrane segment at 318 to 338 (AVPIFVALSCFGSMNGGVFAV) threads the bilayer. Residues 339 to 364 (SRLFYVASREGHLPEILSMIHVRKHT) lie on the Cytoplasmic side of the membrane. A helical transmembrane segment spans residues 365-385 (PLPAVIVLHPLTMIMLFSGDL). The Extracellular portion of the chain corresponds to 386–387 (DS). Residues 388 to 408 (LLNFLSFARWLFIGLAVAGLI) form a helical membrane-spanning segment. At 409–422 (YLRYKCPDMHRPFK) the chain is on the cytoplasmic side. The helical transmembrane segment at 423–443 (VPLFIPALFSFTCLFMVALSL) threads the bilayer. The Extracellular portion of the chain corresponds to 444–449 (YSDPFS). Residues 450–470 (TGIGSVITLTGVPAYYLFIIW) form a helical membrane-spanning segment. Residues 471-501 (DKKPRWFRIMSEKITRTLQIILEVVPEEDKL) lie on the Cytoplasmic side of the membrane.

The protein belongs to the amino acid-polyamine-organocation (APC) superfamily. L-type amino acid transporter (LAT) (TC 2.A.3.8) family. As to quaternary structure, disulfide-linked heterodimer with the amino acid transport protein SLC3A2/4F2hc; this interaction mediates cell membrane localization.

It localises to the cell membrane. The protein resides in the cell projection. It is found in the microvillus membrane. The enzyme catalyses L-cystine(out) + L-glutamate(in) = L-cystine(in) + L-glutamate(out). It catalyses the reaction an L-alpha-amino acid(in) + L-kynurenine(out) = an L-alpha-amino acid(out) + L-kynurenine(in). The catalysed reaction is N-acetyl-L-cysteine(out) + L-glutamate(in) = N-acetyl-L-cysteine(in) + L-glutamate(out). In terms of biological role, heterodimer with SLC3A2, that functions as an antiporter by mediating the exchange of extracellular anionic L-cystine and intracellular L-glutamate across the cellular plasma membrane. Provides L-cystine for the maintenance of the redox balance between extracellular L-cystine and L-cysteine and for the maintenance of the intracellular levels of glutathione that is essential for cells protection from oxidative stress. The transport is sodium-independent, electroneutral with a stoichiometry of 1:1, and is drove by the high intracellular concentration of L-glutamate and the intracellular reduction of L-cystine. In addition, mediates the import of L-kynurenine leading to anti-ferroptotic signaling propagation required to maintain L-cystine and glutathione homeostasis. Moreover, mediates N-acetyl-L-cysteine uptake into the placenta leading to subsequently down-regulation of pathways associated with oxidative stress, inflammation and apoptosis. In vitro can also transport L-aspartate. May participate in astrocyte and meningeal cell proliferation during development and can provide neuroprotection by promoting glutathione synthesis and delivery from non-neuronal cells such as astrocytes and meningeal cells to immature neurons. Controls the production of pheomelanin pigment directly. In Pongo abelii (Sumatran orangutan), this protein is Cystine/glutamate transporter.